A 132-amino-acid polypeptide reads, in one-letter code: Fatty acid-binding protein 9 (132 aa).

Phosphoserine is present on residues S13, S14, S40, S42, S44, and S91.

The protein belongs to the calycin superfamily. Fatty-acid binding protein (FABP) family. As to expression, testis.

It localises to the cytoplasm. The chain is Fatty acid-binding protein 9 (Fabp9) from Mus musculus (Mouse).